Here is a 341-residue protein sequence, read N- to C-terminus: Glycerol-3-phosphate dehydrogenase [NAD(P)+] (341 aa).

Residues Ser-17, Trp-18, Arg-37, and Lys-112 each coordinate NADPH. Sn-glycerol 3-phosphate-binding residues include Lys-112 and Gly-140. Ala-144 contacts NADPH. Sn-glycerol 3-phosphate contacts are provided by Lys-195, Asp-248, Ser-258, Arg-259, and Asn-260. The active-site Proton acceptor is Lys-195. Arg-259 serves as a coordination point for NADPH. NADPH is bound by residues Val-283 and Glu-285.

This sequence belongs to the NAD-dependent glycerol-3-phosphate dehydrogenase family.

It localises to the cytoplasm. It catalyses the reaction sn-glycerol 3-phosphate + NAD(+) = dihydroxyacetone phosphate + NADH + H(+). It carries out the reaction sn-glycerol 3-phosphate + NADP(+) = dihydroxyacetone phosphate + NADPH + H(+). Its pathway is membrane lipid metabolism; glycerophospholipid metabolism. Functionally, catalyzes the reduction of the glycolytic intermediate dihydroxyacetone phosphate (DHAP) to sn-glycerol 3-phosphate (G3P), the key precursor for phospholipid synthesis. The protein is Glycerol-3-phosphate dehydrogenase [NAD(P)+] of Mycobacterium avium (strain 104).